The sequence spans 97 residues: Ribosomal biogenesis factor (97 aa).

Residue serine 19 is modified to Phosphoserine. The residue at position 21 (lysine 21) is an N6-acetyllysine. Position 69 is a phosphoserine (serine 69).

In terms of assembly, associates with the pre-60S ribosomal particles.

The protein resides in the nucleus. The protein localises to the nucleolus. Functionally, trans-acting factor in ribosome biogenesis required for efficient 40S and 60S subunit production. In Mus musculus (Mouse), this protein is Ribosomal biogenesis factor (Rbis).